The primary structure comprises 378 residues: Quinolinate synthase (378 aa).

Iminosuccinate contacts are provided by His59 and Ser80. Cys125 is a binding site for [4Fe-4S] cluster. Residues 151–153 (YAN) and Ser168 contribute to the iminosuccinate site. Cys212 provides a ligand contact to [4Fe-4S] cluster. Iminosuccinate is bound by residues 238–240 (HPE) and Thr255. A [4Fe-4S] cluster-binding site is contributed by Cys309.

It belongs to the quinolinate synthase family. Type 1 subfamily. It depends on [4Fe-4S] cluster as a cofactor.

The protein localises to the cytoplasm. It catalyses the reaction iminosuccinate + dihydroxyacetone phosphate = quinolinate + phosphate + 2 H2O + H(+). It participates in cofactor biosynthesis; NAD(+) biosynthesis; quinolinate from iminoaspartate: step 1/1. Functionally, catalyzes the condensation of iminoaspartate with dihydroxyacetone phosphate to form quinolinate. The polypeptide is Quinolinate synthase (Burkholderia orbicola (strain MC0-3)).